The following is a 501-amino-acid chain: Cytochrome P450 90A4 (501 aa).

The chain crosses the membrane as a helical span at residues 2 to 22 (AAAALLLLAAAAAAVVVAMAL). C446 is a binding site for heme.

It belongs to the cytochrome P450 family. It depends on heme as a cofactor. As to expression, highly expressed in shoot apex and inflorenscence. Expressed in roots, stems, leaf blades and leaf sheaths.

The protein resides in the cell membrane. It functions in the pathway plant hormone biosynthesis; brassinosteroid biosynthesis. Functionally, catalyzes the C23-alpha-hydroxylation step in brassinosteroid biosynthesis. Converts 6-deoxocathasterone to 6-deoxoteasterone in the late C6-oxidation pathway and cathasterone to teasterone (TE) in the early C6-oxidation pathway of brassinolide (BL) biosynthesis. This is Cytochrome P450 90A4 from Oryza sativa subsp. japonica (Rice).